A 341-amino-acid polypeptide reads, in one-letter code: MSASQFGSRFVITTFGESHGTALGVVIDGCPAGVNFDEGLLKKELERRRPGHHGSGQIVSGRQETDAPEVLSGVFDGKTLGTPMAIIVRNQDARSQDYSVIKNSPRAGHADDMWRNKFGHSDHRGGGRSSGRETVSRVMAGSVAQMMMKHVSAPTKVIGYASQIGPMTLTDAERAEVSKKDIDSFQARFPSSRDQEVADLLKKAQDNGESHGGVAEILIQNPPAHLGQPVFHKLKSDLAMAFLSVGATNGFELGLGFEAAEVKGTQFHQGPQDAYGGIRGGISTGESILLRVSFKPTSSILDVAKKGRHDPCIVTRAIPVLEAMTWLVLADHYLWSKTDRI.

Disordered stretches follow at residues 45-64 (LERR…GRQE) and 109-134 (HADD…GRET). Residue Arg-48 coordinates NADP(+). Residues 128 to 130 (RSS), Gly-280, 295 to 299 (KPTSS), and Arg-308 contribute to the FMN site.

This sequence belongs to the chorismate synthase family. In terms of assembly, homotetramer. The cofactor is FMNH2.

It catalyses the reaction 5-O-(1-carboxyvinyl)-3-phosphoshikimate = chorismate + phosphate. Its pathway is metabolic intermediate biosynthesis; chorismate biosynthesis; chorismate from D-erythrose 4-phosphate and phosphoenolpyruvate: step 7/7. Its function is as follows. Catalyzes the anti-1,4-elimination of the C-3 phosphate and the C-6 proR hydrogen from 5-enolpyruvylshikimate-3-phosphate (EPSP) to yield chorismate, which is the branch point compound that serves as the starting substrate for the three terminal pathways of aromatic amino acid biosynthesis. This reaction introduces a second double bond into the aromatic ring system. In Bdellovibrio bacteriovorus (strain ATCC 15356 / DSM 50701 / NCIMB 9529 / HD100), this protein is Chorismate synthase.